We begin with the raw amino-acid sequence, 716 residues long: Polyribonucleotide nucleotidyltransferase (716 aa).

Residues aspartate 488 and aspartate 494 each contribute to the Mg(2+) site. The KH domain maps to 555-614 (PKIETITIPTDKIREVIGTGGKVIREIVATTGAKVDINDEGTVKVSASDGAKIKAAIDWI). One can recognise an S1 motif domain in the interval 624–692 (GAIYDGKVVK…DRGKTKLSMK (69 aa)). Residues 695–716 (DQETGEDLSKKEAVSPEEAVNT) are disordered.

It belongs to the polyribonucleotide nucleotidyltransferase family. The cofactor is Mg(2+).

The protein resides in the cytoplasm. The catalysed reaction is RNA(n+1) + phosphate = RNA(n) + a ribonucleoside 5'-diphosphate. Functionally, involved in mRNA degradation. Catalyzes the phosphorolysis of single-stranded polyribonucleotides processively in the 3'- to 5'-direction. The protein is Polyribonucleotide nucleotidyltransferase of Caulobacter sp. (strain K31).